The primary structure comprises 446 residues: MNAKEANFDGLVGPTHNYAGLSFGNVASLSNEKSDANPKAAAKQGLRKMKQLADLGFAQGVLPPQERPSLRLLRELGFSGKDADVIAKAARQAPELLAAASSASAMWTANAATVSPSADTSDARVHFTPANLCSKLHRAIEHESTRRTLAAIFADEARFAVHDALPGTPALGDEGAANHTRFCAEYGAPGVEFFVYGRAEYRRGPEPTRFPARQTFEASRAVAHRHGLREEATIYAQQRPDVIDAGVFHNDVIAVGNRDTLFCHEHAFVDRQAVYDALAASLGALGAQLNVIEVPDRAVSVADAVGSYLFNSQLLAREDGTQMLVVPQECRENANVAAYLDALVAGNGPIRDVRVFDLRESMKNGGGPACLRLRVVLNDAERAAVKPNVWIGDALFASLDAWIDKHYRDRLSPVDLADPALLDESRTALDELTQILGLGSLYDFQR.

Substrate-binding positions include 19–28 (AGLSFGNVAS), asparagine 110, and 137–138 (HR). Glutamate 174 is an active-site residue. Arginine 213 contacts substrate. Residue histidine 249 is part of the active site. Substrate is bound by residues aspartate 251 and asparagine 364. Cysteine 370 serves as the catalytic Nucleophile.

The protein belongs to the succinylarginine dihydrolase family. In terms of assembly, homodimer.

It catalyses the reaction N(2)-succinyl-L-arginine + 2 H2O + 2 H(+) = N(2)-succinyl-L-ornithine + 2 NH4(+) + CO2. The protein operates within amino-acid degradation; L-arginine degradation via AST pathway; L-glutamate and succinate from L-arginine: step 2/5. In terms of biological role, catalyzes the hydrolysis of N(2)-succinylarginine into N(2)-succinylornithine, ammonia and CO(2). The chain is N-succinylarginine dihydrolase from Burkholderia mallei (strain NCTC 10247).